The sequence spans 356 residues: INO80 complex subunit B (356 aa).

The segment at 1–71 (MSKLWRRGST…PSPAKPQLKL (71 aa)) is disordered. The segment covering 33-51 (HGVHKKKHKKHKKKHKKKH) has biased composition (basic residues). Residues serine 97, serine 99, serine 127, serine 130, and serine 132 each carry the phosphoserine modification. The segment at 124-150 (DEDSNLSPSPLRDLSGGLGGQEEEEEQ) is disordered. Positions 213–245 (LLKREERARKRRLQAARRAEEHKNQTIERLTKT) form a coiled coil. 2 disordered regions span residues 246 to 269 (AATSGRGGRGGARGERRGGRAAAP) and 286 to 310 (FPPGVPAPTAVSQRPSPSGPPPRCS). The segment at 305 to 336 (PPPRCSVPGCPHPRRYACSRTGQALCSLQCYR) adopts an HIT-type zinc-finger fold.

As to quaternary structure, component of the chromatin remodeling INO80 complex; specifically part of a complex module associated with the helicase ATP-binding and the helicase C-terminal domain of INO80. Interacts with RP9.

The protein resides in the nucleus. Its subcellular location is the nucleolus. In terms of biological role, induces growth and cell cycle arrests at the G1 phase of the cell cycle. Proposed core component of the chromatin remodeling INO80 complex which is involved in transcriptional regulation, DNA replication and probably DNA repair. This is INO80 complex subunit B (INO80B) from Homo sapiens (Human).